The chain runs to 204 residues: Octanoyltransferase (204 aa).

In terms of domain architecture, BPL/LPL catalytic spans 30–204 (CETPDEIWLL…QSFINQLTDV (175 aa)). Substrate contacts are provided by residues 69-76 (RGGQITYH), 136-138 (SLG), and 149-151 (GIA). Residue Cys167 is the Acyl-thioester intermediate of the active site.

It belongs to the LipB family.

Its subcellular location is the cytoplasm. It carries out the reaction octanoyl-[ACP] + L-lysyl-[protein] = N(6)-octanoyl-L-lysyl-[protein] + holo-[ACP] + H(+). It participates in protein modification; protein lipoylation via endogenous pathway; protein N(6)-(lipoyl)lysine from octanoyl-[acyl-carrier-protein]: step 1/2. In terms of biological role, catalyzes the transfer of endogenously produced octanoic acid from octanoyl-acyl-carrier-protein onto the lipoyl domains of lipoate-dependent enzymes. Lipoyl-ACP can also act as a substrate although octanoyl-ACP is likely to be the physiological substrate. The chain is Octanoyltransferase from Nitrosomonas europaea (strain ATCC 19718 / CIP 103999 / KCTC 2705 / NBRC 14298).